We begin with the raw amino-acid sequence, 560 residues long: Nibrin homolog (560 aa).

The FHA domain occupies 25-87 (YKVGRKDCDV…YGTFFNKVQG (63 aa)). Residues 115–190 (TFRLSFVPIV…KQIVLGDWFK (76 aa)) form the BRCT domain. The Nuclear localization signal signature appears at 511–518 (YKRGTVID).

The protein belongs to the Nibrin family. As to quaternary structure, component of the MRN complex composed of two heterodimers RAD50 and MRE11 associated with a single NBS1.

The protein localises to the nucleus. It localises to the chromosome. Its function is as follows. Component of the MRN complex, which plays a central role in double-strand break (DSB) repair, DNA recombination, maintenance of telomere integrity and meiosis. The MRN complex is involved in the repair of DNA double-strand breaks (DSBs) via homologous recombination (HR), an error-free mechanism which primarily occurs during S and G2 phases. The complex (1) mediates the end resection of damaged DNA, which generates proper single-stranded DNA, a key initial steps in HR, and is (2) required for the recruitment of other repair factors and efficient activation of ATM and ATR upon DNA damage. The MRN complex possesses single-strand endonuclease activity and double-strand-specific 3'-5' exonuclease activity, which are provided by MRE11, to initiate end resection, which is required for single-strand invasion and recombination. Within the MRN complex, NBS1 acts as a protein-protein adapter, which specifically recognizes and binds phosphorylated proteins, promoting their recruitment to DNA damage sites. Recruits MRE11 and RAD50 components of the MRN complex to DSBs in response to DNA damage. This chain is Nibrin homolog, found in Oryza sativa subsp. indica (Rice).